Here is a 184-residue protein sequence, read N- to C-terminus: 3-hydroxyanthranilate 3,4-dioxygenase (184 aa).

Residue arginine 44 coordinates O2. Residues histidine 48, glutamate 54, and histidine 92 each contribute to the Fe cation site. Glutamate 54 contacts substrate. Substrate is bound by residues arginine 96 and glutamate 106. A divalent metal cation-binding residues include cysteine 121, cysteine 126, cysteine 162, and cysteine 165.

The protein belongs to the 3-HAO family. Fe(2+) serves as cofactor.

The protein localises to the cytoplasm. It carries out the reaction 3-hydroxyanthranilate + O2 = (2Z,4Z)-2-amino-3-carboxymuconate 6-semialdehyde. It participates in cofactor biosynthesis; NAD(+) biosynthesis; quinolinate from L-kynurenine: step 3/3. In terms of biological role, catalyzes the oxidative ring opening of 3-hydroxyanthranilate to 2-amino-3-carboxymuconate semialdehyde, which spontaneously cyclizes to quinolinate. In Pyricularia oryzae (strain 70-15 / ATCC MYA-4617 / FGSC 8958) (Rice blast fungus), this protein is 3-hydroxyanthranilate 3,4-dioxygenase.